The following is a 441-amino-acid chain: MPFDVQFLKVFDGVLMLFERAKAVFPGGVNSPARALKHLPTPLVAKAASGPYLYTDRGRLVDFCLAFGAIILGHAHPKVRRAVEEQLARGWIYALLTEEEVLFAEKIRAHVPSVEKMRFVNSGTEATMNAVRLARGFTGRDYIIKFDGNFHGSHDYVLVKAGSGAATWGIPTSAGIPSDVVKMTVVVPYNDVDAFVKAVREVGDRLAAVIVEPIAGNYGLILPEVEFLKALREETERVGALLIFDEVITGFRVGLGGAQGLYGVVPDLTTLGKVIGGGFPIGVFGGKSFIMDLVAPQGPVYNAGTFNAHPVSIAAGLAVLEELEGGQVYSVANDAARRMAEGIRDLAERVGFDVVVKHIASMFQFYFKKGDVKTPQDVRESNEKLYLKLHELAIGHGVYLAPSQFEVNFTSAAHTAEVVEEALGALEKVFRELRREVGGNS.

K273 carries the post-translational modification N6-(pyridoxal phosphate)lysine.

This sequence belongs to the class-III pyridoxal-phosphate-dependent aminotransferase family. HemL subfamily. Pyridoxal 5'-phosphate is required as a cofactor.

It is found in the cytoplasm. It catalyses the reaction (S)-4-amino-5-oxopentanoate = 5-aminolevulinate. Its pathway is porphyrin-containing compound metabolism; protoporphyrin-IX biosynthesis; 5-aminolevulinate from L-glutamyl-tRNA(Glu): step 2/2. The polypeptide is Glutamate-1-semialdehyde 2,1-aminomutase (Pyrobaculum calidifontis (strain DSM 21063 / JCM 11548 / VA1)).